Consider the following 435-residue polypeptide: GTPase Obg (435 aa).

The 158-residue stretch at 1 to 158 (MFLDTAKVSV…RQLELELKIL (158 aa)) folds into the Obg domain. The OBG-type G domain maps to 159-336 (ADVGLVGFPS…LLEATAELLA (178 aa)). GTP is bound by residues 165–172 (GFPSVGKS), 190–194 (FTTIV), 212–215 (DLPG), 282–285 (NKMD), and 317–319 (SSL). Residues serine 172 and threonine 192 each coordinate Mg(2+). The OCT domain maps to 357 to 435 (GFAAEEKAFE…IGKFEFEFVD (79 aa)).

Belongs to the TRAFAC class OBG-HflX-like GTPase superfamily. OBG GTPase family. As to quaternary structure, monomer. The cofactor is Mg(2+).

The protein resides in the cytoplasm. In terms of biological role, an essential GTPase which binds GTP, GDP and possibly (p)ppGpp with moderate affinity, with high nucleotide exchange rates and a fairly low GTP hydrolysis rate. Plays a role in control of the cell cycle, stress response, ribosome biogenesis and in those bacteria that undergo differentiation, in morphogenesis control. The chain is GTPase Obg from Streptococcus equi subsp. zooepidemicus (strain MGCS10565).